Consider the following 436-residue polypeptide: 3-ketoacyl-CoA thiolase (436 aa).

C99 functions as the Acyl-thioester intermediate in the catalytic mechanism. Catalysis depends on proton acceptor residues H392 and C422.

This sequence belongs to the thiolase-like superfamily. Thiolase family. As to quaternary structure, heterotetramer of two alpha chains (FadJ) and two beta chains (FadI).

The protein resides in the cytoplasm. It catalyses the reaction an acyl-CoA + acetyl-CoA = a 3-oxoacyl-CoA + CoA. It participates in lipid metabolism; fatty acid beta-oxidation. In terms of biological role, catalyzes the final step of fatty acid oxidation in which acetyl-CoA is released and the CoA ester of a fatty acid two carbons shorter is formed. The protein is 3-ketoacyl-CoA thiolase of Escherichia coli (strain 55989 / EAEC).